We begin with the raw amino-acid sequence, 568 residues long: DNA ligase 2 (568 aa).

ATP is bound at residue Glu254. Catalysis depends on Lys256, which acts as the N6-AMP-lysine intermediate. Residues Arg261, Arg276, Glu306, Phe346, Arg425, and Lys431 each coordinate ATP.

Belongs to the ATP-dependent DNA ligase family. The cofactor is Mg(2+).

The catalysed reaction is ATP + (deoxyribonucleotide)n-3'-hydroxyl + 5'-phospho-(deoxyribonucleotide)m = (deoxyribonucleotide)n+m + AMP + diphosphate.. Its function is as follows. DNA ligase that seals nicks in double-stranded DNA during DNA replication, DNA recombination and DNA repair. The chain is DNA ligase 2 from Methanosarcina acetivorans (strain ATCC 35395 / DSM 2834 / JCM 12185 / C2A).